Consider the following 342-residue polypeptide: Flagellar P-ring protein (342 aa).

Residues 1–19 (MKRVFLWLIFVLAFHKLLA) form the signal peptide.

This sequence belongs to the FlgI family. As to quaternary structure, the basal body constitutes a major portion of the flagellar organelle and consists of four rings (L,P,S, and M) mounted on a central rod.

The protein localises to the periplasm. The protein resides in the bacterial flagellum basal body. Functionally, assembles around the rod to form the L-ring and probably protects the motor/basal body from shearing forces during rotation. The polypeptide is Flagellar P-ring protein (Helicobacter pylori (strain P12)).